The chain runs to 498 residues: ATP synthase subunit beta, chloroplastic (498 aa).

G172–T179 lines the ATP pocket.

It belongs to the ATPase alpha/beta chains family. F-type ATPases have 2 components, CF(1) - the catalytic core - and CF(0) - the membrane proton channel. CF(1) has five subunits: alpha(3), beta(3), gamma(1), delta(1), epsilon(1). CF(0) has four main subunits: a(1), b(1), b'(1) and c(9-12).

The protein resides in the plastid. The protein localises to the chloroplast thylakoid membrane. It carries out the reaction ATP + H2O + 4 H(+)(in) = ADP + phosphate + 5 H(+)(out). In terms of biological role, produces ATP from ADP in the presence of a proton gradient across the membrane. The catalytic sites are hosted primarily by the beta subunits. The protein is ATP synthase subunit beta, chloroplastic of Illicium oligandrum (Star anise).